Reading from the N-terminus, the 324-residue chain is NADH-ubiquinone oxidoreductase chain 1 (324 aa).

8 helical membrane-spanning segments follow: residues methionine 10–valine 30, phenylalanine 76–leucine 96, leucine 107–glycine 127, valine 143–leucine 163, proline 178–alanine 198, leucine 229–phenylalanine 249, glutamate 260–valine 280, and phenylalanine 300–glycine 320.

The protein belongs to the complex I subunit 1 family.

The protein resides in the mitochondrion inner membrane. It carries out the reaction a ubiquinone + NADH + 5 H(+)(in) = a ubiquinol + NAD(+) + 4 H(+)(out). In terms of biological role, core subunit of the mitochondrial membrane respiratory chain NADH dehydrogenase (Complex I) that is believed to belong to the minimal assembly required for catalysis. Complex I functions in the transfer of electrons from NADH to the respiratory chain. The immediate electron acceptor for the enzyme is believed to be ubiquinone. This is NADH-ubiquinone oxidoreductase chain 1 (MT-ND1) from Excalfactoria chinensis (Blue-breasted quail).